A 498-amino-acid chain; its full sequence is Tyrosine 3-monooxygenase (498 aa).

Residues 1–10 (MPTPSAPSPQ) are compositionally biased toward pro residues. Residues 1–31 (MPTPSAPSPQPKGFRRAVSEQDAKQAEAVTS) are disordered. The residue at position 19 (Ser-19) is a Phosphoserine; by CaMK2. Ser-31 carries the phosphoserine modification. Ser-40 carries the post-translational modification Phosphoserine; by CaMK2 and PKA. Positions 331, 336, and 376 each coordinate Fe cation. Position 472 is a phosphoserine (Ser-472).

This sequence belongs to the biopterin-dependent aromatic amino acid hydroxylase family. As to quaternary structure, homotetramer. Interacts (when phosphorylated at Ser-19) with YWHAG; one YWHAG dimer binds to one TH tetramer and this interaction may influence the phosphorylation and dephosphorylation of other sites. Interacts with NT5DC2; the interaction results in reduced phosphorylation and decreased catalytic activity of TH. The cofactor is Fe(2+). Phosphorylated on Ser-19, Ser-31 and Ser-40 by several protein kinases with different site specificities. Phosphorylation at Ser-31 and Ser-40 leads to an increase of TH activity. Phosphorylation at Ser-40 activates the enzyme and also counteracts the feedback inhibition of TH by catecholamines. Phosphorylation of Ser-19 and Ser-31 triggers the proteasomal degradation of TH through the ubiquitin-proteasome pathway. Phosphorylation at Ser-31 facilitates transport of TH from the soma to the nerve terminals via the microtubule network. Phosphorylation at Ser-19 induces the high-affinity binding to the 14-3-3 protein YWHAG; this interaction may influence the phosphorylation and dephosphorylation of other sites. Ser-19 increases the phosphorylation at Ser-40 in a hierarchical manner, leading to increased activity.

The protein localises to the cytoplasm. The protein resides in the perinuclear region. It localises to the nucleus. Its subcellular location is the cell projection. It is found in the axon. The protein localises to the cytoplasmic vesicle. The protein resides in the secretory vesicle. It localises to the synaptic vesicle. The enzyme catalyses (6R)-L-erythro-5,6,7,8-tetrahydrobiopterin + L-tyrosine + O2 = (4aS,6R)-4a-hydroxy-L-erythro-5,6,7,8-tetrahydrobiopterin + L-dopa. It participates in catecholamine biosynthesis; dopamine biosynthesis; dopamine from L-tyrosine: step 1/2. With respect to regulation, inhibited in feedback fashion by the catecholamine neurotransmitters, especially by dopamine in competition with tetrahydrobiopterin. Phosphorylation of several Ser/Thr residues in the N-terminus regulates the catalytic activity. Ser-31 and Ser-40 are readily phosphorylated to activate the catalytic activity. A cysteine modification induced by N-ethylmaleimide (NEM), inhibits tyrosine 3-monooxygenase activity through the modification of the Cys-177. Its function is as follows. Catalyzes the conversion of L-tyrosine to L-dihydroxyphenylalanine (L-Dopa), the rate-limiting step in the biosynthesis of catecholamines, dopamine, noradrenaline, and adrenaline. Uses tetrahydrobiopterin and molecular oxygen to convert tyrosine to L-Dopa. In addition to tyrosine, is able to catalyze the hydroxylation of phenylalanine and tryptophan but with lower specificity. Positively regulates the regression of retinal hyaloid vessels during postnatal development. This Rattus norvegicus (Rat) protein is Tyrosine 3-monooxygenase (Th).